The following is a 124-amino-acid chain: TP53-target gene 3 protein (124 aa).

A compositionally biased stretch (polar residues) spans 1–11 (MRASPCISQPA). Residues 1–42 (MRASPCISQPAASWHPRPSALRPTAGSGPDTRTPGTVEDGSA) form a disordered region.

In terms of tissue distribution, strongly expressed in testis. Weakly expressed in heart, placenta and skeletal muscle.

Its subcellular location is the cytoplasm. It localises to the nucleus. In terms of biological role, may play a significant role in p53/TP53-mediating signaling pathway. This is TP53-target gene 3 protein from Homo sapiens (Human).